The sequence spans 374 residues: UDP-N-acetylglucosamine--N-acetylmuramyl-(pentapeptide) pyrophosphoryl-undecaprenol N-acetylglucosamine transferase (374 aa).

Residues 35–37 (TGG), Asn144, Arg185, Ser211, and Gln305 contribute to the UDP-N-acetyl-alpha-D-glucosamine site.

This sequence belongs to the glycosyltransferase 28 family. MurG subfamily.

The protein localises to the cell inner membrane. The enzyme catalyses di-trans,octa-cis-undecaprenyl diphospho-N-acetyl-alpha-D-muramoyl-L-alanyl-D-glutamyl-meso-2,6-diaminopimeloyl-D-alanyl-D-alanine + UDP-N-acetyl-alpha-D-glucosamine = di-trans,octa-cis-undecaprenyl diphospho-[N-acetyl-alpha-D-glucosaminyl-(1-&gt;4)]-N-acetyl-alpha-D-muramoyl-L-alanyl-D-glutamyl-meso-2,6-diaminopimeloyl-D-alanyl-D-alanine + UDP + H(+). It participates in cell wall biogenesis; peptidoglycan biosynthesis. In terms of biological role, cell wall formation. Catalyzes the transfer of a GlcNAc subunit on undecaprenyl-pyrophosphoryl-MurNAc-pentapeptide (lipid intermediate I) to form undecaprenyl-pyrophosphoryl-MurNAc-(pentapeptide)GlcNAc (lipid intermediate II). In Trichodesmium erythraeum (strain IMS101), this protein is UDP-N-acetylglucosamine--N-acetylmuramyl-(pentapeptide) pyrophosphoryl-undecaprenol N-acetylglucosamine transferase.